The following is a 292-amino-acid chain: Ribosomal RNA small subunit methyltransferase A (292 aa).

S-adenosyl-L-methionine contacts are provided by Asn-46, Leu-48, Gly-73, Glu-94, Asp-118, and Asn-136.

Belongs to the class I-like SAM-binding methyltransferase superfamily. rRNA adenine N(6)-methyltransferase family. RsmA subfamily.

It localises to the cytoplasm. It carries out the reaction adenosine(1518)/adenosine(1519) in 16S rRNA + 4 S-adenosyl-L-methionine = N(6)-dimethyladenosine(1518)/N(6)-dimethyladenosine(1519) in 16S rRNA + 4 S-adenosyl-L-homocysteine + 4 H(+). Specifically dimethylates two adjacent adenosines (A1518 and A1519) in the loop of a conserved hairpin near the 3'-end of 16S rRNA in the 30S particle. May play a critical role in biogenesis of 30S subunits. The polypeptide is Ribosomal RNA small subunit methyltransferase A (Deinococcus radiodurans (strain ATCC 13939 / DSM 20539 / JCM 16871 / CCUG 27074 / LMG 4051 / NBRC 15346 / NCIMB 9279 / VKM B-1422 / R1)).